A 788-amino-acid polypeptide reads, in one-letter code: Pyridoxal-dependent decarboxylase domain-containing protein 1 (788 aa).

The span at 28-40 shows a compositional bias: basic and acidic residues; it reads EDSQRRTEEENGK. The tract at residues 28–51 is disordered; the sequence is EDSQRRTEEENGKKLISGDIPGPL. Phosphothreonine is present on Thr-414. Phosphoserine is present on Ser-652. The segment at 684-788 is disordered; sequence AGVTLPPTPS…SQVEGPESLR (105 aa). 2 positions are modified to phosphothreonine: Thr-687 and Thr-691. Phosphoserine occurs at positions 710, 718, and 722. Residues 725–734 are compositionally biased toward basic and acidic residues; that stretch reads HIEDLEKVER. Positions 738 to 750 are enriched in polar residues; that stretch reads GPEQITLEASSTE. Phosphoserine occurs at positions 748, 757, 779, and 786. The segment covering 772–788 has biased composition (basic and acidic residues); it reads PHPEDDHSQVEGPESLR.

This sequence belongs to the group II decarboxylase family. Requires pyridoxal 5'-phosphate as cofactor.

The polypeptide is Pyridoxal-dependent decarboxylase domain-containing protein 1 (PDXDC1) (Homo sapiens (Human)).